Consider the following 84-residue polypeptide: Small ribosomal subunit protein bS16 (84 aa).

It belongs to the bacterial ribosomal protein bS16 family.

In Dichelobacter nodosus (strain VCS1703A), this protein is Small ribosomal subunit protein bS16.